A 253-amino-acid chain; its full sequence is Imidazole glycerol phosphate synthase subunit HisF (253 aa).

Catalysis depends on residues D11 and D130.

This sequence belongs to the HisA/HisF family. As to quaternary structure, heterodimer of HisH and HisF.

The protein resides in the cytoplasm. The catalysed reaction is 5-[(5-phospho-1-deoxy-D-ribulos-1-ylimino)methylamino]-1-(5-phospho-beta-D-ribosyl)imidazole-4-carboxamide + L-glutamine = D-erythro-1-(imidazol-4-yl)glycerol 3-phosphate + 5-amino-1-(5-phospho-beta-D-ribosyl)imidazole-4-carboxamide + L-glutamate + H(+). The protein operates within amino-acid biosynthesis; L-histidine biosynthesis; L-histidine from 5-phospho-alpha-D-ribose 1-diphosphate: step 5/9. IGPS catalyzes the conversion of PRFAR and glutamine to IGP, AICAR and glutamate. The HisF subunit catalyzes the cyclization activity that produces IGP and AICAR from PRFAR using the ammonia provided by the HisH subunit. This Cereibacter sphaeroides (strain ATCC 17029 / ATH 2.4.9) (Rhodobacter sphaeroides) protein is Imidazole glycerol phosphate synthase subunit HisF.